A 453-amino-acid polypeptide reads, in one-letter code: Glutamyl-tRNA reductase (453 aa).

Residues 50 to 53, Ser110, 115 to 117, and Gln121 each bind substrate; these read TCNR and EPQ. The active-site Nucleophile is the Cys51. An NADP(+)-binding site is contributed by 190–195; the sequence is GAGEMA. Positions 423–436 are enriched in basic and acidic residues; the sequence is REKVPTDAHADRKP. A disordered region spans residues 423-453; it reads REKVPTDAHADRKPPNFAETSDDFDVTDASE. A compositionally biased stretch (acidic residues) spans 442 to 453; sequence TSDDFDVTDASE.

This sequence belongs to the glutamyl-tRNA reductase family. Homodimer.

The catalysed reaction is (S)-4-amino-5-oxopentanoate + tRNA(Glu) + NADP(+) = L-glutamyl-tRNA(Glu) + NADPH + H(+). It functions in the pathway porphyrin-containing compound metabolism; protoporphyrin-IX biosynthesis; 5-aminolevulinate from L-glutamyl-tRNA(Glu): step 1/2. Functionally, catalyzes the NADPH-dependent reduction of glutamyl-tRNA(Glu) to glutamate 1-semialdehyde (GSA). The chain is Glutamyl-tRNA reductase from Solidesulfovibrio magneticus (strain ATCC 700980 / DSM 13731 / RS-1) (Desulfovibrio magneticus).